We begin with the raw amino-acid sequence, 136 residues long: Large ribosomal subunit protein uL16 (136 aa).

The protein belongs to the universal ribosomal protein uL16 family. In terms of assembly, part of the 50S ribosomal subunit.

Functionally, binds 23S rRNA and is also seen to make contacts with the A and possibly P site tRNAs. The polypeptide is Large ribosomal subunit protein uL16 (Ehrlichia canis (strain Jake)).